We begin with the raw amino-acid sequence, 433 residues long: tRNA-2-methylthio-N(6)-dimethylallyladenosine synthase (433 aa).

The 116-residue stretch at K3–A118 folds into the MTTase N-terminal domain. [4Fe-4S] cluster-binding residues include C12, C49, C81, C150, C154, and C157. A Radical SAM core domain is found at R136–S371. A TRAM domain is found at E372 to G433.

The protein belongs to the methylthiotransferase family. MiaB subfamily. As to quaternary structure, monomer. It depends on [4Fe-4S] cluster as a cofactor.

Its subcellular location is the cytoplasm. It catalyses the reaction N(6)-dimethylallyladenosine(37) in tRNA + (sulfur carrier)-SH + AH2 + 2 S-adenosyl-L-methionine = 2-methylsulfanyl-N(6)-dimethylallyladenosine(37) in tRNA + (sulfur carrier)-H + 5'-deoxyadenosine + L-methionine + A + S-adenosyl-L-homocysteine + 2 H(+). Catalyzes the methylthiolation of N6-(dimethylallyl)adenosine (i(6)A), leading to the formation of 2-methylthio-N6-(dimethylallyl)adenosine (ms(2)i(6)A) at position 37 in tRNAs that read codons beginning with uridine. This Nitratiruptor sp. (strain SB155-2) protein is tRNA-2-methylthio-N(6)-dimethylallyladenosine synthase.